We begin with the raw amino-acid sequence, 201 residues long: Recombination protein RecR (201 aa).

The C4-type zinc-finger motif lies at 60–75; that stretch reads CTSCGNVDTSDPCTIC. A Toprim domain is found at 83 to 178; sequence TTLVVVEDVS…KVTRLAHGVP (96 aa).

This sequence belongs to the RecR family.

In terms of biological role, may play a role in DNA repair. It seems to be involved in an RecBC-independent recombinational process of DNA repair. It may act with RecF and RecO. The chain is Recombination protein RecR from Methylobacterium radiotolerans (strain ATCC 27329 / DSM 1819 / JCM 2831 / NBRC 15690 / NCIMB 10815 / 0-1).